Reading from the N-terminus, the 178-residue chain is Translation initiation factor IF-3 (178 aa).

Belongs to the IF-3 family. Monomer.

It is found in the cytoplasm. In terms of biological role, IF-3 binds to the 30S ribosomal subunit and shifts the equilibrium between 70S ribosomes and their 50S and 30S subunits in favor of the free subunits, thus enhancing the availability of 30S subunits on which protein synthesis initiation begins. The protein is Translation initiation factor IF-3 of Picosynechococcus sp. (strain ATCC 27264 / PCC 7002 / PR-6) (Agmenellum quadruplicatum).